Consider the following 359-residue polypeptide: Type-1 angiotensin II receptor (359 aa).

The Extracellular portion of the chain corresponds to 1–25 (MILNSSTEDGIKRIQDDCPKAGRHS). N4 carries N-linked (GlcNAc...) asparagine glycosylation. Angiotensin II contacts are provided by Q15 and D17. Disulfide bonds link C18–C274 and C101–C180. The helical transmembrane segment at 26–55 (YIFVMIPTLYSIIFVVGIFGNSLVVIVIYF) threads the bilayer. Residues 56–61 (YMKLKT) lie on the Cytoplasmic side of the membrane. A helical membrane pass occupies residues 62–89 (VASVFLLNLALADICFLLTLPLWAVYTA). Residues 90 to 98 (MEYRWPFGN) are Extracellular-facing. The helical transmembrane segment at 99–125 (YLCKIASASVSFNLYASVFLLTCLSID) threads the bilayer. The Cytoplasmic portion of the chain corresponds to 126-141 (RYLAIVHPMKSRLRRT). A helical membrane pass occupies residues 142 to 165 (MLVAKVTCVIIWLMAGLASLPAVI). Residues 166-190 (HRNVFFIENTNITVCAFHYESQNST) are Extracellular-facing. R167 contacts angiotensin II. Residue N176 is glycosylated (N-linked (GlcNAc...) asparagine). Positions 182, 183, and 184 each coordinate angiotensin II. N-linked (GlcNAc...) asparagine glycosylation occurs at N188. Residues 191-216 (LPIGLGLTKNILGFMFPFLIILTSYT) traverse the membrane as a helical segment. K199 lines the angiotensin II pocket. Topologically, residues 217–239 (LIWKALKKAYEIQKNKPRNDDIF) are cytoplasmic. Residues 240-268 (KIIMAIVLFFFFSWVPHQIFTFLDVLIQL) form a helical membrane-spanning segment. Residues 269–278 (GIIHDCKISD) lie on the Extracellular side of the membrane. A helical membrane pass occupies residues 279 to 304 (IVDTAMPITICIAYFNNCLNPLFYGF). Residues 305–359 (LGKKFKKYFLQLLKYIPPKAKSHSTLSTKMSTLSYRPSDNVSSSAKKPVQCFEVE) are Cytoplasmic-facing. Positions 337 to 349 (LSYRPSDNVSSSA) are enriched in polar residues. The segment at 337 to 359 (LSYRPSDNVSSSAKKPVQCFEVE) is disordered. A lipid anchor (S-palmitoyl cysteine) is attached at C355.

It belongs to the G-protein coupled receptor 1 family. As to quaternary structure, interacts with MAS1. Interacts with ARRB1. Interacts with FLNA (via filamin repeat 21); increases PKA-mediated phosphorylation of FLNA. In terms of processing, C-terminal Ser or Thr residues may be phosphorylated. In terms of tissue distribution, expressed in liver, kidney, adrenal gland, heart and colon.

The protein resides in the cell membrane. Functionally, receptor for angiotensin II, a vasoconstricting peptide, which acts as a key regulator of blood pressure and sodium retention by the kidney. The activated receptor in turn couples to G-alpha proteins G(q) (GNAQ, GNA11, GNA14 or GNA15) and thus activates phospholipase C and increases the cytosolic Ca(2+) concentrations, which in turn triggers cellular responses such as stimulation of protein kinase C. In Cavia porcellus (Guinea pig), this protein is Type-1 angiotensin II receptor (AGTR1).